Here is a 1149-residue protein sequence, read N- to C-terminus: Tape measure protein (1149 aa).

Transmembrane regions (helical) follow at residues 389–409 (VVIF…AGMV), 431–451 (MGTI…FMIA), 561–581 (LAFL…VSFL), 689–709 (AAVQ…PTLI), 726–746 (ALPA…QALI), 781–801 (ILMA…TAAI), 840–860 (LIAG…DFVP), and 865–885 (AGVQ…GSLL). The disordered stretch occupies residues 1084–1109 (RVDLFNTGSDNPNQPQSQSKNNQGEQ). The span at 1094 to 1106 (NPNQPQSQSKNNQ) shows a compositional bias: low complexity.

Its subcellular location is the host membrane. The protein localises to the virion. In terms of biological role, plays a role in virion tail formation. The length of the tape measure protein is proportional to the length of the phage's tail. This chain is Tape measure protein (TMP), found in Streptococcus pneumoniae (Bacteriophage Dp-1).